The primary structure comprises 126 residues: Glycine cleavage system H protein (126 aa).

The 83-residue stretch at 22–104 (IATVGITAFA…YGRGWLFKVE (83 aa)) folds into the Lipoyl-binding domain. N6-lipoyllysine is present on Lys-63.

Belongs to the GcvH family. The glycine cleavage system is composed of four proteins: P, T, L and H. (R)-lipoate serves as cofactor.

The glycine cleavage system catalyzes the degradation of glycine. The H protein shuttles the methylamine group of glycine from the P protein to the T protein. The protein is Glycine cleavage system H protein of Thermobifida fusca (strain YX).